Consider the following 374-residue polypeptide: L-serine/homoserine O-acetyltransferase (374 aa).

The AB hydrolase-1 domain maps to A46–V357. S149 (nucleophile) is an active-site residue. Catalysis depends on residues D319 and H352.

This sequence belongs to the AB hydrolase superfamily. MetX family. As to quaternary structure, homodimer.

It is found in the cytoplasm. It carries out the reaction L-serine + acetyl-CoA = O-acetyl-L-serine + CoA. The catalysed reaction is L-homoserine + acetyl-CoA = O-acetyl-L-homoserine + CoA. It participates in antibiotic biosynthesis. Involved in the biosynthesis of the antibiotic D-cycloserine (DCS), a cyclic structural analog of D-alanine, used as an antitubercular agent. Catalyzes the transfer of the acetyl group from acetyl-CoA to the hydroxyl group of L-serine to yield the activated serine, O-acetyl-L-serine. It prefers L-serine over L-homoserine. The chain is L-serine/homoserine O-acetyltransferase from Streptomyces lavendulae.